Reading from the N-terminus, the 561-residue chain is MALRTLSTFPSLPRRHTTTRREPNLTVIYRNPTTSIVCKSIANSEPPVSLSERDGFAAAAPTPGERFLENQRAHEAQKVVKKEIKKEKKKKKEEIIARKVVDTSVSCCYGCGAPLQTSDVDSPGFVDLVTYELKKKHHQLRTMICGRCQLLSHGHMITAVGGNGGYPGGKQFVSADELREKLSHLRHEKALIVKLVDIVDFNGSFLARVRDLVGANPIILVITKIDLLPKGTDMNCIGDWVVEVTMRKKLNVLSVHLTSSKSLDGVSGVASEIQKEKKGRDVYILGAANVGKSAFINALLKTMAERDPVAAAAQKYKPIQSAVPGTTLGPIQINAFVGGEKLYDTPGVHLHHRQAAVVHSDDLPALAPQNRLRGQSFDISTLPTQSSSSPKGESLNGYTFFWGGLVRIDILKALPETCFTFYGPKALEIHAVPTKTATAFYEKELGVLLTPPSGKNQMQEWKGLQSHRLLQIEINDAKRPASDVAISGLGWISIEPIRKTRGTEPRDLNEAEHEIHICVSVPKPVEVFLRPTLPIGTSGTEWYQYRELTDKEEEVRPKWYF.

The transit peptide at 1 to 31 directs the protein to the chloroplast and mitochondrion; sequence MALRTLSTFPSLPRRHTTTRREPNLTVIYRN. GTP-binding positions include 108 to 111, 166 to 174, 223 to 226, 260 to 261, and 289 to 294; these read CYGC, YPGGKQFVS, TKID, SK, and NVGKSA. The 177-residue stretch at 175-351 folds into the CP-type G domain; it reads ADELREKLSH…LYDTPGVHLH (177 aa).

It belongs to the TRAFAC class YlqF/YawG GTPase family. NOA1 subfamily. Expressed in aleurone layer and the embryo.

It is found in the mitochondrion. It localises to the plastid. The protein localises to the chloroplast. It carries out the reaction 2 L-arginine + 3 NADPH + 4 O2 + H(+) = 2 L-citrulline + 2 nitric oxide + 3 NADP(+) + 4 H2O. Stimulated by calcium/calmodulin. Inhibited by L-NAME. Not activated by tetrahydrobiopterin (BH4), FAD, FMN, or heme. Functionally, exhibits cGTPase activity; binds and hydrolyzes specifically GTP. May participate in ribosome assembly and stability and thus regulates protein synthesis in chloroplasts. The GTPase activity requires MgCl(2)and the presence of either KCl or (NH(4))(2)SO(4). Involved in the post-transcriptional regulation of the methylerythritol phosphate (MEP) pathway. Involved in chlorophyll-a fluorescence regulation. Its function is as follows. May mediate the production or accumulation of nitric oxide (NO) which is a messenger molecule involved in hormonal signaling and defense responses in plant. Acts as an antisenescence agent. Plays a crucial role in both extracellular calmodulin (ExtCaM)-triggered and salicylic acid (SA)-mediated H(2)O(2)-dependent stomatal closure. In Arabidopsis thaliana (Mouse-ear cress), this protein is NO-associated protein 1, chloroplastic/mitochondrial (NOA1).